Reading from the N-terminus, the 535-residue chain is Peptide chain release factor 3 (535 aa).

The 269-residue stretch at 8–276 folds into the tr-type G domain; the sequence is ARRRTFAIIS…ALVEQAPPPG (269 aa). Residues 17–24, 85–89, and 139–142 contribute to the GTP site; these read SHPDAGKT, DTPGH, and NKMD.

Belongs to the TRAFAC class translation factor GTPase superfamily. Classic translation factor GTPase family. PrfC subfamily.

It localises to the cytoplasm. Increases the formation of ribosomal termination complexes and stimulates activities of RF-1 and RF-2. It binds guanine nucleotides and has strong preference for UGA stop codons. It may interact directly with the ribosome. The stimulation of RF-1 and RF-2 is significantly reduced by GTP and GDP, but not by GMP. This Bordetella petrii (strain ATCC BAA-461 / DSM 12804 / CCUG 43448) protein is Peptide chain release factor 3.